The chain runs to 442 residues: MRRGERRGPAGPLGDGPALGLRRSTESEVYDDGTNTFFWRAHTLTVLFILTCALGYVTLLEETPQDTAYNTKRGIVASILVFLCFGVTQAKDGPFSRPHPAYWRFWLCVSVVYELFLIFILFQTVQDGRQFMKYIDPHLGVPLPERDYGGNCLIYDPGNESDPFHNIWDKLDGFVPAHFFGWYLKTLMIRDWWMCMIISVMFEFLEYSLEHQLPNFSECWWDHWIMDVILCNGLGIYCGMKTLSWLSLKTYKWQGLWNIPTYKGKMKRIVFQFTPYSWVKFEWKPASSLRRWLAVCGIIFVFLLAELNTFYLKFVLWMPPEHYLVLLRLVFFVNVGGVAMREIYDFMDDPKFHKKLGQQAWLVAAITATEFLIVVKYDPYTLTLSLPFYITQCWILGIILVLTWTAWRFFIRDITLRYKEIRRQKQEHKYEKDKCLSNGDGH.

Over 1–40 (MRRGERRGPAGPLGDGPALGLRRSTESEVYDDGTNTFFWR) the chain is Cytoplasmic. A helical transmembrane segment spans residues 41–61 (AHTLTVLFILTCALGYVTLLE). The Lumenal portion of the chain corresponds to 62-74 (ETPQDTAYNTKRG). The helical transmembrane segment at 75–95 (IVASILVFLCFGVTQAKDGPF) threads the bilayer. Residues 96 to 104 (SRPHPAYWR) are Cytoplasmic-facing. Residues 105-125 (FWLCVSVVYELFLIFILFQTV) traverse the membrane as a helical segment. Over 126 to 291 (QDGRQFMKYI…EWKPASSLRR (166 aa)) the chain is Lumenal. 2 N-linked (GlcNAc...) asparagine glycosylation sites follow: asparagine 159 and asparagine 215. The helical transmembrane segment at 292–312 (WLAVCGIIFVFLLAELNTFYL) threads the bilayer. Lysine 313 is a topological domain (cytoplasmic). A helical membrane pass occupies residues 314–334 (FVLWMPPEHYLVLLRLVFFVN). Over 335–354 (VGGVAMREIYDFMDDPKFHK) the chain is Lumenal. Residues 355-375 (KLGQQAWLVAAITATEFLIVV) form a helical membrane-spanning segment. The Cytoplasmic segment spans residues 376–381 (KYDPYT). The chain crosses the membrane as a helical span at residues 382-402 (LTLSLPFYITQCWILGIILVL). The Lumenal portion of the chain corresponds to 403 to 442 (TWTAWRFFIRDITLRYKEIRRQKQEHKYEKDKCLSNGDGH).

This sequence belongs to the phosphatidyl serine synthase family.

Its subcellular location is the endoplasmic reticulum membrane. It catalyses the reaction a 1,2-diacyl-sn-glycero-3-phosphoethanolamine + L-serine = a 1,2-diacyl-sn-glycero-3-phospho-L-serine + ethanolamine. The catalysed reaction is 1-hexadecanoyl-2-(9Z-octadecenoyl)-sn-glycero-3-phosphoethanolamine + L-serine = 1-hexadecanoyl-2-(9Z-octadecenoyl)-sn-glycero-3-phospho-L-serine + ethanolamine. The enzyme catalyses 1-hexadecanoyl-2-(4Z,7Z,10Z,13Z,16Z,19Z-docosahexaenoyl)-sn-glycero-3-phosphoethanolamine + L-serine = 1-hexadecanoyl-2-(4Z,7Z,10Z,13Z,16Z,19Z-docosahexaenoyl)-sn-glycero-3-phosphoserine + ethanolamine. It carries out the reaction 1-octadecanoyl-2-(5Z,8Z,11Z,14Z)-eicosatetraenoyl-sn-glycero-3-phosphoethanolamine + L-serine = 1-octadecanoyl-2-(5Z,8Z,11Z,14Z)-eicosatetraenoyl-sn-glycero-3-phosphoserine + ethanolamine. It catalyses the reaction 1-octadecanoyl-2-(4Z,7Z,10Z,13Z,16Z,19Z-docosahexaenoyl)-sn-glycero-3-phosphoethanolamine + L-serine = 1-octadecanoyl-2-(4Z,7Z,10Z,13Z,16Z,19Z-docosahexaenoyl)-sn-glycero-3-phosphoserine + ethanolamine. The catalysed reaction is 1-(1Z-octadecenyl)-2-(4Z,7Z,10Z,13Z,16Z,19Z-docosahexaenoyl)-sn-glycero-3-phosphoethanolamine + L-serine = 1-(1Z-octadecenyl)-2-(4Z,7Z,10Z,13Z,16Z,19Z-docosahexaenoyl)-sn-glycero-3-phospho-L-serine + ethanolamine. The enzyme catalyses 1-octadecanoyl-2-(9Z-octadecenoyl)-sn-glycero-3-phosphoethanolamine + L-serine = 1-octadecanoyl-2-(9Z-octadecenoyl)-sn-glycero-3-phospho-L-serine + ethanolamine. It carries out the reaction 1-(1Z-octadecenyl)-2-(9Z-octadecenoyl)-sn-glycero-3-phosphoethanolamine + L-serine = 1-(1Z-octadecenyl)-2-(9Z-octadecenoyl)-sn-glycero-3-phospho-L-serine + ethanolamine. It catalyses the reaction 1-(1Z-octadecenyl)-2-(5Z,8Z,11Z,14Z- eicosatetraenoyl)-sn-glycero-3-phosphoethanolamine + L-serine = 1-(1Z-octadecenyl)-2-(5Z,8Z,11Z,14Z-eicosatetraenoyl)-sn-glycero-3-phospho-L-serine + ethanolamine. It functions in the pathway phospholipid metabolism; phosphatidylserine biosynthesis. Its function is as follows. Catalyzes a base-exchange reaction in which the polar head group of phosphatidylethanolamine (PE) or phosphatidylcholine (PC) is replaced by L-serine. Catalyzes the conversion of phosphatatidylethanolamine and does not act on phosphatidylcholine. Can utilize both phosphatidylethanolamine (PE) plasmalogen and diacyl PE as substrate and the latter is six times better utilized, indicating the importance of an ester linkage at the sn-1 position. Although it shows no sn-1 fatty acyl preference, exhibits significant preference towards docosahexaenoic acid (22:6n-3) compared with 18:1 or 20:4 at the sn-2 position. The chain is Phosphatidylserine synthase 2 (PTDSS1) from Gallus gallus (Chicken).